Here is a 422-residue protein sequence, read N- to C-terminus: Probable metallocarboxypeptidase A (422 aa).

Positions 1–17 are cleaved as a signal peptide; that stretch reads MRSVLSLALLAANVVTA. Positions 18–112 are cleaved as a propeptide — activation peptide; sequence AVVAPFDYSG…FEAYSAGYAP (95 aa). Positions 119–419 constitute a Peptidase M14 domain; that stretch reads SYHSYQDHLS…AGTVAMLKAV (301 aa). Zn(2+) contacts are provided by histidine 179 and glutamate 182. Substrate contacts are provided by residues 179-182, arginine 237, and 254-255; these read HARE and NR. The cysteines at positions 248 and 271 are disulfide-linked. Residue histidine 309 participates in Zn(2+) binding. 310–311 contributes to the substrate binding site; that stretch reads SY. The Proton donor/acceptor role is filled by glutamate 385.

It belongs to the peptidase M14 family. Zn(2+) is required as a cofactor.

It localises to the secreted. Functionally, extracellular metalloprotease that contributes to pathogenicity. This chain is Probable metallocarboxypeptidase A (MCPA), found in Arthroderma benhamiae (strain ATCC MYA-4681 / CBS 112371) (Trichophyton mentagrophytes).